The primary structure comprises 188 residues: SAYSvFN domain-containing protein 1 (188 aa).

A compositionally biased stretch (basic and acidic residues) spans 1–10; it reads MEQRLAEFRE. Disordered regions lie at residues 1–43 and 60–80; these read MEQR…ATPK and AIAQ…PEST. Residues 1–100 are Cytoplasmic-facing; the sequence is MEQRLAEFRE…SFLTNITFLK (100 aa). Composition is skewed to low complexity over residues 22–43 and 60–75; these read STSS…ATPK and AIAQ…AGQQ. A middle helical (MH) region spans residues 86–100; it reads SSCRQSFLTNITFLK. An intramembrane region (helical) is located at residues 101–121; sequence VLLWLVLLGLFVELEFGLAYF. The Cytoplasmic portion of the chain corresponds to 122–188; that stretch reads VLSMFYWMYV…RTSPSCSSYP (67 aa).

It belongs to the SAYSD1 family. In terms of assembly, associates (via N-terminus) with ribosomes. Enriched in testis; predominantly expressed in round and elongating spermatids.

Its subcellular location is the endoplasmic reticulum membrane. It localises to the cytoplasmic vesicle membrane. Ufmylation 'reader' component of a translocation-associated quality control pathway, a mechanism that takes place when a ribosome has stalled during translation, and which is required to degrade clogged substrates. Specifically recognizes and binds ufmylated ribosomes when a ribosome has stalled, promoting the transport of stalled nascent chain via the TRAPP complex to lysosomes for degradation. The polypeptide is SAYSvFN domain-containing protein 1 (Mus musculus (Mouse)).